A 202-amino-acid polypeptide reads, in one-letter code: Superoxide dismutase [Mn] (202 aa).

The Mn(2+) site is built by histidine 27, histidine 82, aspartate 164, and histidine 168.

It belongs to the iron/manganese superoxide dismutase family. In terms of assembly, homodimer. It depends on Mn(2+) as a cofactor.

It carries out the reaction 2 superoxide + 2 H(+) = H2O2 + O2. Its function is as follows. Destroys superoxide anion radicals which are normally produced within the cells and which are toxic to biological systems. This chain is Superoxide dismutase [Mn] (sodA), found in Listeria monocytogenes serovar 1/2a (strain ATCC BAA-679 / EGD-e).